Here is a 1770-residue protein sequence, read N- to C-terminus: Vitellogenin (1770 aa).

Residues 1 to 16 form the signal peptide; it reads MLLLLTLLLFAGTVAA. The Vitellogenin domain maps to 22–809; sequence WQVGNEYTYL…SEDSVIPRIL (788 aa). A disulfide bridge links Cys178 with Cys222. Asn296 is a glycosylation site (N-linked (GlcNAc...) asparagine). The tract at residues 373–394 is disordered; the sequence is SSSSSISSSEENDFWQPKPTLE. Asn1067 carries an N-linked (GlcNAc...) asparagine glycan. In terms of domain architecture, VWFD spans 1442–1635; sequence TSCMLDKTRA…SYALISNQCE (194 aa). Cystine bridges form between Cys1444–Cys1598 and Cys1466–Cys1634.

In terms of tissue distribution, accumulates in the hemolymph. Represents up to 70% of the queen's hemolymph proteins. During the first week of the worker adult life, when it becomes a nurse bee and performs brood-rearing tasks, the vitellogenin titer increases and may account for up to 40% of the total hemolymph proteins.

It localises to the secreted. Functionally, precursor of the egg-yolk proteins that are sources of nutrients during embryonic development. Involved in the differentiation of honeybee larvae into queens. The sequence is that of Vitellogenin (Vg) from Apis mellifera (Honeybee).